A 479-amino-acid chain; its full sequence is FAD-dependent monooxygenase ausM (479 aa).

The FAD site is built by Glu40, Gly54, and Arg113. Tyr224 is a catalytic residue. N-linked (GlcNAc...) asparagine glycosylation is present at Asn289. Residues Asp316 and Ala329 each coordinate FAD. The chain crosses the membrane as a helical span at residues 449–469; sequence TLPWLVISLPVLASMLCYLVY.

This sequence belongs to the paxM FAD-dependent monooxygenase family. FAD is required as a cofactor.

The protein resides in the membrane. It participates in secondary metabolite biosynthesis; terpenoid biosynthesis. In terms of biological role, FAD-dependent monooxygenase; part of the gene cluster B that mediates the biosynthesis of austinol and dehydroaustinol, two fungal meroterpenoids. The first step of the pathway is the synthesis of 3,5-dimethylorsellinic acid by the polyketide synthase ausA. 3,5-dimethylorsellinic acid is then prenylated by the polyprenyl transferase ausN. Further epoxidation by the FAD-dependent monooxygenase ausM and cyclization by the probable terpene cyclase ausL lead to the formation of protoaustinoid A. Protoaustinoid A is then oxidized to spiro-lactone preaustinoid A3 by the combined action of the FAD-binding monooxygenases ausB and ausC, and the dioxygenase ausE. Acid-catalyzed keto-rearrangement and ring contraction of the tetraketide portion of preaustinoid A3 by ausJ lead to the formation of preaustinoid A4. The aldo-keto reductase ausK, with the help of ausH, is involved in the next step by transforming preaustinoid A4 into isoaustinone which is in turn hydroxylated by the P450 monooxygenase ausI to form austinolide. Finally, the cytochrome P450 monooxygenase ausG modifies austinolide to austinol. Austinol can be further modified to dehydroaustinol which forms a diffusible complex with diorcinol that initiates conidiation. Due to genetic rearrangements of the clusters and the subsequent loss of some enzymes, the end products of the Emericella nidulans austinoid biosynthesis clusters are austinol and dehydroaustinol, even if additional enzymes, such as the O-acetyltransferase ausQ and the cytochrome P450 monooxygenase ausR are still functional. This Emericella nidulans (strain FGSC A4 / ATCC 38163 / CBS 112.46 / NRRL 194 / M139) (Aspergillus nidulans) protein is FAD-dependent monooxygenase ausM.